Reading from the N-terminus, the 206-residue chain is Thymidylate kinase (206 aa).

11 to 18 (GIDGAGKT) is an ATP binding site.

It belongs to the thymidylate kinase family.

The enzyme catalyses dTMP + ATP = dTDP + ADP. In terms of biological role, phosphorylation of dTMP to form dTDP in both de novo and salvage pathways of dTTP synthesis. This chain is Thymidylate kinase, found in Burkholderia vietnamiensis (strain G4 / LMG 22486) (Burkholderia cepacia (strain R1808)).